Here is a 408-residue protein sequence, read N- to C-terminus: NADH-quinone oxidoreductase subunit D (408 aa).

It belongs to the complex I 49 kDa subunit family. In terms of assembly, NDH-1 is composed of 14 different subunits. Subunits NuoB, C, D, E, F, and G constitute the peripheral sector of the complex.

It is found in the cell inner membrane. The enzyme catalyses a quinone + NADH + 5 H(+)(in) = a quinol + NAD(+) + 4 H(+)(out). In terms of biological role, NDH-1 shuttles electrons from NADH, via FMN and iron-sulfur (Fe-S) centers, to quinones in the respiratory chain. The immediate electron acceptor for the enzyme in this species is believed to be ubiquinone. Couples the redox reaction to proton translocation (for every two electrons transferred, four hydrogen ions are translocated across the cytoplasmic membrane), and thus conserves the redox energy in a proton gradient. The polypeptide is NADH-quinone oxidoreductase subunit D (Campylobacter jejuni subsp. jejuni serotype O:6 (strain 81116 / NCTC 11828)).